The chain runs to 310 residues: p-hydroxybenzoic acid efflux pump subunit AaeA (310 aa).

A helical membrane pass occupies residues 12-32 (AITLVLVILAFIAIFRAWVYY).

Belongs to the membrane fusion protein (MFP) (TC 8.A.1) family.

The protein resides in the cell inner membrane. Its function is as follows. Forms an efflux pump with AaeB. This chain is p-hydroxybenzoic acid efflux pump subunit AaeA, found in Escherichia fergusonii (strain ATCC 35469 / DSM 13698 / CCUG 18766 / IAM 14443 / JCM 21226 / LMG 7866 / NBRC 102419 / NCTC 12128 / CDC 0568-73).